The following is a 931-amino-acid chain: G patch domain-containing protein 1 (931 aa).

Acidic residues predominate over residues 1 to 12 (MAALDSDSDEDL). 3 disordered regions span residues 1 to 41 (MAAL…TVRD), 72 to 92 (TPSS…LGPE), and 169 to 213 (QGIG…YLPE). Ala2 carries the N-acetylalanine modification. Phosphoserine occurs at positions 6 and 8. Residues 72-81 (TPSSFVSSRQ) show a composition bias toward polar residues. Positions 152 to 198 (KLSVGFELLRKMGWKEGQGIGPRVKRRPRRQKPDPGVKIYGCALPPG) constitute a G-patch domain. Positions 202 to 211 (GSEDEDDDYL) are enriched in acidic residues. Lys313 participates in a covalent cross-link: Glycyl lysine isopeptide (Lys-Gly) (interchain with G-Cter in SUMO2). Phosphoserine is present on residues Ser358 and Ser479. Disordered regions lie at residues 567 to 594 (SRFT…VSDK) and 659 to 931 (SPVT…LRRQ). A compositionally biased stretch (basic and acidic residues) spans 582 to 593 (EVPRDQENDVSD). The span at 659 to 668 (SPVTQASSEK) shows a compositional bias: polar residues. Residues 669–695 (VAQHRASDKSRKPSRWDTSKEEKKEDS) are compositionally biased toward basic and acidic residues. Ser715 is modified (phosphoserine). Acidic residues predominate over residues 769-780 (SEDEQGDSEDDQ). A compositionally biased stretch (basic and acidic residues) spans 781-792 (EGTREADFKSSQ). Basic residues predominate over residues 852–888 (EKHKKNKEKHKTKKEHRRKKEKKKKHRKHKHKGKQKN). Low complexity predominate over residues 896 to 905 (SSESTDSSDS). Residues 922-931 (RLKRLPLRRQ) show a composition bias toward basic residues.

Belongs to the GPATCH1 family.

The protein is G patch domain-containing protein 1 (GPATCH1) of Bos taurus (Bovine).